Reading from the N-terminus, the 144-residue chain is Deoxyuridine 5'-triphosphate nucleotidohydrolase (144 aa).

Substrate contacts are provided by residues 63–65 (RSG), Asn76, and 80–82 (TID).

Belongs to the dUTPase family. Requires Mg(2+) as cofactor.

The enzyme catalyses dUTP + H2O = dUMP + diphosphate + H(+). It functions in the pathway pyrimidine metabolism; dUMP biosynthesis; dUMP from dCTP (dUTP route): step 2/2. Its function is as follows. This enzyme is involved in nucleotide metabolism: it produces dUMP, the immediate precursor of thymidine nucleotides and it decreases the intracellular concentration of dUTP so that uracil cannot be incorporated into DNA. This chain is Deoxyuridine 5'-triphosphate nucleotidohydrolase, found in Bacteroides thetaiotaomicron (strain ATCC 29148 / DSM 2079 / JCM 5827 / CCUG 10774 / NCTC 10582 / VPI-5482 / E50).